The sequence spans 347 residues: Protein RecA (347 aa).

67–74 (GPESSGKT) serves as a coordination point for ATP.

Belongs to the RecA family.

It is found in the cytoplasm. Can catalyze the hydrolysis of ATP in the presence of single-stranded DNA, the ATP-dependent uptake of single-stranded DNA by duplex DNA, and the ATP-dependent hybridization of homologous single-stranded DNAs. It interacts with LexA causing its activation and leading to its autocatalytic cleavage. This chain is Protein RecA, found in Helicobacter pylori (strain HPAG1).